Reading from the N-terminus, the 222-residue chain is Phosphoglycolate phosphatase (222 aa).

Asp-8 (nucleophile) is an active-site residue. 2 residues coordinate Mg(2+): Asp-8 and Asp-10. Residue Lys-146 coordinates substrate. The Mg(2+) site is built by Asp-169 and Asp-173.

Belongs to the archaeal SPP-like hydrolase family. Mg(2+) is required as a cofactor.

It catalyses the reaction 2-phosphoglycolate + H2O = glycolate + phosphate. Functionally, catalyzes the dephosphorylation of 2-phosphoglycolate. In Methanothrix thermoacetophila (strain DSM 6194 / JCM 14653 / NBRC 101360 / PT) (Methanosaeta thermophila), this protein is Phosphoglycolate phosphatase.